Reading from the N-terminus, the 468-residue chain is Methionine aminopeptidase 2 (468 aa).

Positions 1–10 (MGSKTFEGEG) are enriched in basic and acidic residues. The disordered stretch occupies residues 1-106 (MGSKTFEGEG…PPRVPLDDLF (106 aa)). Residues 16-25 (DPSNSTSPNS) show a composition bias toward polar residues. The segment covering 31-40 (RGAHLSRDGD) has biased composition (basic and acidic residues). The segment covering 46-56 (GDGDDGADGDE) has biased composition (acidic residues). The span at 61–75 (VTTTPLTEQQPSSET) shows a compositional bias: polar residues. Residues 78-90 (KKKKRRKPKKKIS) show a composition bias toward basic residues. H219 lines the substrate pocket. Residues D240, D251, and H320 each coordinate a divalent metal cation. Residue H328 participates in substrate binding. A divalent metal cation contacts are provided by E353 and E449.

It belongs to the peptidase M24A family. Methionine aminopeptidase eukaryotic type 2 subfamily. Requires Co(2+) as cofactor. Zn(2+) serves as cofactor. Mn(2+) is required as a cofactor. The cofactor is Fe(2+).

It is found in the cytoplasm. The catalysed reaction is Release of N-terminal amino acids, preferentially methionine, from peptides and arylamides.. Functionally, cotranslationally removes the N-terminal methionine from nascent proteins. The N-terminal methionine is often cleaved when the second residue in the primary sequence is small and uncharged (Met-Ala-, Cys, Gly, Pro, Ser, Thr, or Val). The polypeptide is Methionine aminopeptidase 2 (Aspergillus oryzae (strain ATCC 42149 / RIB 40) (Yellow koji mold)).